The chain runs to 201 residues: Fimbrial protein FimX (201 aa).

The N-terminal stretch at Met-1–Ala-21 is a signal peptide. Cys-37 and Cys-79 are joined by a disulfide.

The protein belongs to the fimbrial protein family.

The protein localises to the fimbrium. Its function is as follows. Bordetella pertussis is the causative agent of whooping cough. An essential step in the disease process is the attachment of the bacteria to the ciliated epithelium of the respiratory tract, enabling the organism to resist normal host-clearance mechanisms. It is unclear which bacterial cell surface component are responsible for adherence but the fimbriae of B.pertussis are prime candidates for being involved in this process. The chain is Fimbrial protein FimX (fimX) from Bordetella pertussis (strain Tohama I / ATCC BAA-589 / NCTC 13251).